Reading from the N-terminus, the 27-residue chain is Delta-conotoxin SuVIA (27 aa).

3 cysteine pairs are disulfide-bonded: Cys-1–Cys-17, Cys-8–Cys-21, and Cys-16–Cys-25.

This sequence belongs to the conotoxin O1 superfamily. Expressed by the venom duct, in the proximal part (indicative of a defensive role).

The protein resides in the secreted. This toxin activates voltage-gated sodium channels (Nav1.3/SCN3A (EC(50)=3.98 nM), Nav1.4/SCN4A (EC(50)=4.99 nM), Nav1.6/SCN8A (EC(50)=1.27 nM) and Nav1.7/SCN9A (EC(50)=2.42 nM)). It shifts the voltage-dependence of activation to more hyperpolarized potentials but has only little effect on channel inactivation. In vivo, it induces nocifensive or pain-like behaviors in mice when injected intraplantarly. This is coherent with the specific defensive role deduced from its proximal position in the venom gland. The sequence is that of Delta-conotoxin SuVIA from Conus suturatus (Sutured cone).